Consider the following 176-residue polypeptide: MRRDIPQDTVRRNEQVRAREVRVIGADGEQLGILSRNDAIAHAKELGLDLVEVAATADPPVCRVMDYGRFKYEQQKKKAEAKKNQTVIQIKEIKVRPKTDDHDYDTKVRHIRRFIEEGDRCKVTVFFRGREIVHKDRGQSILDRIVEDTKDIAKMDQEARAEGRTLFMMLAPLPKK.

The protein belongs to the IF-3 family. As to quaternary structure, monomer.

Its subcellular location is the cytoplasm. In terms of biological role, IF-3 binds to the 30S ribosomal subunit and shifts the equilibrium between 70S ribosomes and their 50S and 30S subunits in favor of the free subunits, thus enhancing the availability of 30S subunits on which protein synthesis initiation begins. In Nitratidesulfovibrio vulgaris (strain DSM 19637 / Miyazaki F) (Desulfovibrio vulgaris), this protein is Translation initiation factor IF-3.